A 438-amino-acid chain; its full sequence is uncharacterized protein (438 aa).

The residue at position 273 (lysine 273) is an N6-(pyridoxal phosphate)lysine.

Belongs to the class-III pyridoxal-phosphate-dependent aminotransferase family. Requires pyridoxal 5'-phosphate as cofactor.

The protein localises to the mitochondrion. This is an uncharacterized protein from Schizosaccharomyces pombe (strain 972 / ATCC 24843) (Fission yeast).